Consider the following 521-residue polypeptide: Protein nucleotidyltransferase YdiU (521 aa).

ATP contacts are provided by glycine 109, glycine 111, arginine 112, lysine 131, aspartate 143, glycine 144, arginine 194, and arginine 201. Catalysis depends on aspartate 270, which acts as the Proton acceptor. Mg(2+)-binding residues include asparagine 271 and aspartate 280. Residue aspartate 280 coordinates ATP.

It belongs to the SELO family. It depends on Mg(2+) as a cofactor. The cofactor is Mn(2+).

It carries out the reaction L-seryl-[protein] + ATP = 3-O-(5'-adenylyl)-L-seryl-[protein] + diphosphate. The enzyme catalyses L-threonyl-[protein] + ATP = 3-O-(5'-adenylyl)-L-threonyl-[protein] + diphosphate. It catalyses the reaction L-tyrosyl-[protein] + ATP = O-(5'-adenylyl)-L-tyrosyl-[protein] + diphosphate. The catalysed reaction is L-histidyl-[protein] + UTP = N(tele)-(5'-uridylyl)-L-histidyl-[protein] + diphosphate. It carries out the reaction L-seryl-[protein] + UTP = O-(5'-uridylyl)-L-seryl-[protein] + diphosphate. The enzyme catalyses L-tyrosyl-[protein] + UTP = O-(5'-uridylyl)-L-tyrosyl-[protein] + diphosphate. Functionally, nucleotidyltransferase involved in the post-translational modification of proteins. It can catalyze the addition of adenosine monophosphate (AMP) or uridine monophosphate (UMP) to a protein, resulting in modifications known as AMPylation and UMPylation. The sequence is that of Protein nucleotidyltransferase YdiU from Burkholderia pseudomallei (strain K96243).